A 483-amino-acid chain; its full sequence is HSPB1-associated protein 1 (483 aa).

Residues 1 to 26 (MAAGCEGIAPPTLGERTVGEEGEPVK) form a disordered region. Residues 88–208 (ETECSYVDAT…EDTPFLYPTR (121 aa)) are interaction with HSPB1. A JmjC domain is found at 124-288 (WAYADYKYFV…HLARVEEAIT (165 aa)). Residues 388–416 (LIPVTPASEERGGALEGDSEESVSSNGGH) are disordered.

Interacts with CRYAB and HSPB1.

It is found in the cytoplasm. In terms of biological role, may play a role in cellular stress response. The protein is HSPB1-associated protein 1 (Hspbap1) of Mus musculus (Mouse).